Reading from the N-terminus, the 220-residue chain is GTP cyclohydrolase 1 (220 aa).

The Zn(2+) site is built by cysteine 109, histidine 112, and cysteine 180.

The protein belongs to the GTP cyclohydrolase I family. In terms of assembly, homomer.

The enzyme catalyses GTP + H2O = 7,8-dihydroneopterin 3'-triphosphate + formate + H(+). It participates in cofactor biosynthesis; 7,8-dihydroneopterin triphosphate biosynthesis; 7,8-dihydroneopterin triphosphate from GTP: step 1/1. This chain is GTP cyclohydrolase 1, found in Edwardsiella ictaluri (strain 93-146).